The primary structure comprises 328 residues: MSTLLEVNNLKTYFFRKKEPIPAVDGVDFHISKGETVALVGESGSGKSITSLSIMGLVQSSGGKIMDGSIKLEDKDLTSFTENDYCKIRGNEVSMIFQEPMTSLNPVLTIGEQITEVLIYHKNMKKKEARQRAVELLQMVGFSRAEQIMKEYPHRLSGGMRQRVMIAIALSCNPKLLIADEPTTALDVTIQAQVLELMKDLCQKFNTSILLITHDLGVVSEAADRVIVMYCGQVVENATVDDLFLEPLHPYTEGLLTSIPVIDGEIDKLNAIKGSVPTPDNLPPGCRFAPRCPKAMDKCWTNQPSLLTHKSGRTVRCFLYEEEGAEQS.

Residues 5–256 form the ABC transporter domain; it reads LEVNNLKTYF…PLHPYTEGLL (252 aa). 41-48 contributes to the ATP binding site; it reads GESGSGKS.

The protein belongs to the ABC transporter superfamily.

It is found in the cell membrane. In terms of biological role, this protein is a component of an oligopeptide permease, a binding protein-dependent transport system. This APP system can completely substitute for the OPP system in both sporulation and genetic competence, though, unlike OPP, is incapable of transporting tripeptides. Probably responsible for energy coupling to the transport system. The chain is Oligopeptide transport ATP-binding protein AppD (appD) from Bacillus subtilis (strain 168).